The sequence spans 29 residues: uncharacterized protein (29 aa).

A helical transmembrane segment spans residues phenylalanine 7–alanine 27.

The protein localises to the cell inner membrane. This is an uncharacterized protein from Escherichia coli O6:K15:H31 (strain 536 / UPEC).